The chain runs to 198 residues: Probable GTP-binding protein EngB (198 aa).

The EngB-type G domain maps to 22 to 195 (NRNEVAFVGR…IDKLFLEFAT (174 aa)). GTP-binding positions include 30–37 (GRSNVGKS), 57–61 (GKTRL), 75–78 (DLPG), 142–145 (TKSD), and 174–176 (YSS). Positions 37 and 59 each coordinate Mg(2+).

Belongs to the TRAFAC class TrmE-Era-EngA-EngB-Septin-like GTPase superfamily. EngB GTPase family. It depends on Mg(2+) as a cofactor.

Its function is as follows. Necessary for normal cell division and for the maintenance of normal septation. The chain is Probable GTP-binding protein EngB from Clostridium botulinum (strain Alaska E43 / Type E3).